An 801-amino-acid chain; its full sequence is Protein SDA1 homolog (801 aa).

Disordered regions lie at residues 1-40, 495-517, 536-647, and 739-801; these read MGKV…ASRF, RKDR…FARP, GEQG…SKNS, and DYKF…RKPQ. A compositionally biased stretch (polar residues) spans 24-40; the sequence is KSNAPTEGSNSGKASRF. Composition is skewed to acidic residues over residues 544–568 and 583–633; these read DGTD…DADE and NDAE…EASE. Basic residues-rich tracts occupy residues 770–779 and 787–801; these read NKIRGRNRQR and SLRH…RKPQ.

It belongs to the SDA1 family.

The protein localises to the nucleus. Its function is as follows. Required for 60S pre-ribosomal subunits export to the cytoplasm. Required for normal somatic gonad development and for regulation of germline development and proliferation. The polypeptide is Protein SDA1 homolog (pro-3) (Caenorhabditis elegans).